We begin with the raw amino-acid sequence, 907 residues long: Protein translocase subunit SecA (907 aa).

Residues Gln87, 105–109, and Asp512 contribute to the ATP site; that span reads GEGKT. A disordered region spans residues 834 to 907; sequence QEDVERMEEQ…KKYKQCHGKI (74 aa). 2 stretches are compositionally biased toward basic and acidic residues: residues 836-853 and 873-888; these read DVER…EAAR and EEAH…KVGR. Cys892, Cys894, Cys903, and His904 together coordinate Zn(2+). Residues 898–907 are compositionally biased toward basic residues; the sequence is KKYKQCHGKI.

This sequence belongs to the SecA family. Monomer and homodimer. Part of the essential Sec protein translocation apparatus which comprises SecA, SecYEG and auxiliary proteins SecDF-YajC and YidC. The cofactor is Zn(2+).

It localises to the cell inner membrane. It is found in the cytoplasm. It catalyses the reaction ATP + H2O + cellular proteinSide 1 = ADP + phosphate + cellular proteinSide 2.. Part of the Sec protein translocase complex. Interacts with the SecYEG preprotein conducting channel. Has a central role in coupling the hydrolysis of ATP to the transfer of proteins into and across the cell membrane, serving both as a receptor for the preprotein-SecB complex and as an ATP-driven molecular motor driving the stepwise translocation of polypeptide chains across the membrane. The protein is Protein translocase subunit SecA of Aliivibrio fischeri (strain ATCC 700601 / ES114) (Vibrio fischeri).